We begin with the raw amino-acid sequence, 526 residues long: Transcription factor MYC1 (526 aa).

Residues methionine 330–glutamate 351 are disordered. Positions proline 332–aspartate 341 are enriched in polar residues. Residues serine 333–leucine 382 form the bHLH domain.

Homodimer. Interacts with MYB75/PAP1, MYB90/PAP2, MYB4, MYB5, MYB6, MYB23, MYB82, MYB113, MYB114, TT2, MYB0/GL1, and MYB66/WER. In terms of tissue distribution, mostly expressed in developing seeds. Also detected in stems and leaves.

It localises to the nucleus. Trancsription activator, when associated with MYB75/PAP1 or MYB90/PAP2. The protein is Transcription factor MYC1 (BHLH12) of Arabidopsis thaliana (Mouse-ear cress).